Consider the following 299-residue polypeptide: Nucleotide-binding protein SCO1952 (299 aa).

23 to 30 is a binding site for ATP; the sequence is GMSGAGRS. GTP is bound at residue 74-77; the sequence is DVRG.

The protein belongs to the RapZ-like family.

Its function is as follows. Displays ATPase and GTPase activities. The chain is Nucleotide-binding protein SCO1952 from Streptomyces coelicolor (strain ATCC BAA-471 / A3(2) / M145).